A 112-amino-acid chain; its full sequence is UPF0482 protein Ent638_1930 (112 aa).

Residues 1–27 (MTTLRKRLCLATLLSLTALAFTAPVSA) form the signal peptide.

The protein belongs to the UPF0482 family.

This chain is UPF0482 protein Ent638_1930, found in Enterobacter sp. (strain 638).